Here is a 380-residue protein sequence, read N- to C-terminus: Serpin B7 (380 aa).

Residue S217 is modified to Phosphoserine.

It belongs to the serpin family. Ov-serpin subfamily.

It is found in the cytoplasm. Functionally, might function as an inhibitor of Lys-specific proteases. Might influence the maturation of megakaryocytes via its action as a serpin. This chain is Serpin B7 (Serpinb7), found in Mus musculus (Mouse).